We begin with the raw amino-acid sequence, 330 residues long: Protoheme IX farnesyltransferase (330 aa).

Helical transmembrane passes span 33–53 (VMTLVVFTAFAGLIAAPVDAD), 54–74 (PFLAFMSILCLAVGAGAAGAL), 101–121 (VSNAYGFGVVASILSVLLMAL), 126–146 (LAAGLLAFSIFFYAVIYTMIL), 154–174 (IVIGGAAGAFPPMIGWVAATG), 180–200 (AVILFMIIFLWTPPHSWALAL), 227–247 (ILLYSIVLVIFAGAPVLTGLG), 250–270 (VYGATSLGGGALFLLLAWRIF), and 308–328 (VLFAALIVEHAFGAYVAIPGV).

This sequence belongs to the UbiA prenyltransferase family. Protoheme IX farnesyltransferase subfamily. In terms of assembly, interacts with CtaA.

It localises to the cell inner membrane. It carries out the reaction heme b + (2E,6E)-farnesyl diphosphate + H2O = Fe(II)-heme o + diphosphate. Its pathway is porphyrin-containing compound metabolism; heme O biosynthesis; heme O from protoheme: step 1/1. Its function is as follows. Converts heme B (protoheme IX) to heme O by substitution of the vinyl group on carbon 2 of heme B porphyrin ring with a hydroxyethyl farnesyl side group. This chain is Protoheme IX farnesyltransferase, found in Maricaulis maris (strain MCS10) (Caulobacter maris).